Here is a 968-residue protein sequence, read N- to C-terminus: RNA polymerase-associated protein RapA (968 aa).

A Helicase ATP-binding domain is found at 164–334; sequence DVGRRHAPRV…FARLRLLDPN (171 aa). 177-184 contributes to the ATP binding site; it reads DEVGLGKT. Positions 280 to 283 match the DEAH box motif; it reads DEAH. Positions 490–662 constitute a Helicase C-terminal domain; it reads RVEWLMGYLT…YLASPDQTEG (173 aa).

The protein belongs to the SNF2/RAD54 helicase family. RapA subfamily. Interacts with the RNAP. Has a higher affinity for the core RNAP than for the holoenzyme. Its ATPase activity is stimulated by binding to RNAP.

Its function is as follows. Transcription regulator that activates transcription by stimulating RNA polymerase (RNAP) recycling in case of stress conditions such as supercoiled DNA or high salt concentrations. Probably acts by releasing the RNAP, when it is trapped or immobilized on tightly supercoiled DNA. Does not activate transcription on linear DNA. Probably not involved in DNA repair. The sequence is that of RNA polymerase-associated protein RapA from Shigella boydii serotype 4 (strain Sb227).